The primary structure comprises 131 residues: Profilin-3 (131 aa).

Cys-13 and Cys-115 form a disulfide bridge. Residues Ala-81–Thr-97 carry the Involved in PIP2 interaction motif. Phosphothreonine is present on Thr-111.

This sequence belongs to the profilin family. In terms of assembly, occurs in many kinds of cells as a complex with monomeric actin in a 1:1 ratio. Post-translationally, phosphorylated by MAP kinases.

The protein localises to the cytoplasm. The protein resides in the cytoskeleton. Its function is as follows. Binds to actin and affects the structure of the cytoskeleton. At high concentrations, profilin prevents the polymerization of actin, whereas it enhances it at low concentrations. In Olea europaea (Common olive), this protein is Profilin-3.